The following is a 242-amino-acid chain: Phosphatidylcholine synthase (242 aa).

The Cytoplasmic portion of the chain corresponds to 1–15 (MKIFNYKRVPYAEMR). Residues 16–36 (AFSVHILTASGSFLAFLGVVA) form a helical membrane-spanning segment. The Periplasmic segment spans residues 37 to 41 (AAEHR). Residues 42–62 (FIDMFWWLGLALLVDGIDGPI) form a helical membrane-spanning segment. Residues 63–76 (ARKVRVKEVLPNWS) are Cytoplasmic-facing. A helical transmembrane segment spans residues 77–97 (GDTLDNIIDYVTYVLLPAFAL). The Periplasmic segment spans residues 98–100 (YQS). A helical membrane pass occupies residues 101–121 (GMIGEPWSFVAAGMIVVSSAI). Over 122–133 (YYADMGMKTDEY) the chain is Cytoplasmic. A helical transmembrane segment spans residues 134 to 154 (FFSGFPVVWNMIVFTLFVIDA). Over 155-159 (SATTA) the chain is Periplasmic. Residues 160 to 180 (LTVVIVSVVLTFLPINFLHPV) traverse the membrane as a helical segment. The Cytoplasmic portion of the chain corresponds to 181–187 (RVKRLRP). The helical transmembrane segment at 188–208 (LNLGVFFLWSALGIFSLLMHF) threads the bilayer. At 209 to 214 (DTPEWA) the chain is on the periplasmic side. A helical transmembrane segment spans residues 215 to 235 (LILFIVTGAYLYVIGAVLQFF). Residues 236 to 242 (PALGRET) are Cytoplasmic-facing.

This sequence belongs to the CDP-alcohol phosphatidyltransferase class-I family. Mn(2+) is required as a cofactor.

It localises to the cell inner membrane. It catalyses the reaction a CDP-1,2-diacyl-sn-glycerol + choline = a 1,2-diacyl-sn-glycero-3-phosphocholine + CMP + H(+). Condenses choline with CDP-diglyceride to produce phosphatidylcholine and CMP. The chain is Phosphatidylcholine synthase from Rhizobium johnstonii (strain DSM 114642 / LMG 32736 / 3841) (Rhizobium leguminosarum bv. viciae).